The following is a 141-amino-acid chain: HTH-type transcriptional repressor NsrR (141 aa).

The HTH rrf2-type domain maps to Gln-2 to Glu-129. Residues Ile-28–Arg-51 constitute a DNA-binding region (H-T-H motif). 3 residues coordinate [2Fe-2S] cluster: Cys-91, Cys-96, and Cys-102.

[2Fe-2S] cluster is required as a cofactor.

Nitric oxide-sensitive repressor of genes involved in protecting the cell against nitrosative stress. May require iron for activity. The chain is HTH-type transcriptional repressor NsrR from Escherichia coli O127:H6 (strain E2348/69 / EPEC).